The sequence spans 243 residues: MRVNWEEKTEKLVNWLREKTREANASGLLVGLSGGVDSAVVATLIKKAFPEKSLGIIMPCFSNPEDEEDARMIANHLNLKYIVVNLDEPYQALVSSLKNATPHEPEKLALANIKPRLRMTTLYYWAANLNYLVAGTGNRTELEIGYFTKWGDGGVDLLPIGNLTKTEVWEFARYLGLPEKIITKAPSAGLWEGQTDEGEMGFTYKDIDHYLLTGEGSAELVDFVKRMQRKSQHKKRIPEVPML.

31–38 (GLSGGVDS) serves as a coordination point for ATP. D37 serves as a coordination point for Mg(2+). Residue R116 participates in deamido-NAD(+) binding. T136 contacts ATP. E141 lines the Mg(2+) pocket. Deamido-NAD(+) contacts are provided by K149 and D156. Positions 165 and 187 each coordinate ATP. Position 233–234 (233–234 (HK)) interacts with deamido-NAD(+).

Belongs to the NAD synthetase family. As to quaternary structure, homodimer.

The catalysed reaction is deamido-NAD(+) + NH4(+) + ATP = AMP + diphosphate + NAD(+) + H(+). It functions in the pathway cofactor biosynthesis; NAD(+) biosynthesis; NAD(+) from deamido-NAD(+) (ammonia route): step 1/1. Catalyzes the ATP-dependent amidation of deamido-NAD to form NAD. Uses ammonia as a nitrogen source. The polypeptide is NH(3)-dependent NAD(+) synthetase (Carboxydothermus hydrogenoformans (strain ATCC BAA-161 / DSM 6008 / Z-2901)).